Consider the following 188-residue polypeptide: Ribosome maturation factor RimP (188 aa).

Belongs to the RimP family.

The protein resides in the cytoplasm. Required for maturation of 30S ribosomal subunits. In Erythrobacter litoralis (strain HTCC2594), this protein is Ribosome maturation factor RimP.